The primary structure comprises 395 residues: Putative nickel insertion protein (395 aa).

The protein belongs to the LarC family.

The chain is Putative nickel insertion protein from Methanopyrus kandleri (strain AV19 / DSM 6324 / JCM 9639 / NBRC 100938).